Here is a 302-residue protein sequence, read N- to C-terminus: 4-hydroxy-tetrahydrodipicolinate synthase (302 aa).

Thr-44 serves as a coordination point for pyruvate. Residue Tyr-132 is the Proton donor/acceptor of the active site. Lys-160 serves as the catalytic Schiff-base intermediate with substrate. Val-202 lines the pyruvate pocket.

This sequence belongs to the DapA family. Homotetramer; dimer of dimers.

It localises to the cytoplasm. The catalysed reaction is L-aspartate 4-semialdehyde + pyruvate = (2S,4S)-4-hydroxy-2,3,4,5-tetrahydrodipicolinate + H2O + H(+). It functions in the pathway amino-acid biosynthesis; L-lysine biosynthesis via DAP pathway; (S)-tetrahydrodipicolinate from L-aspartate: step 3/4. Catalyzes the condensation of (S)-aspartate-beta-semialdehyde [(S)-ASA] and pyruvate to 4-hydroxy-tetrahydrodipicolinate (HTPA). The sequence is that of 4-hydroxy-tetrahydrodipicolinate synthase from Thermomicrobium roseum (strain ATCC 27502 / DSM 5159 / P-2).